The following is a 327-amino-acid chain: Tetraacyldisaccharide 4'-kinase (327 aa).

58–65 (TVGGTGKT) provides a ligand contact to ATP.

It belongs to the LpxK family.

It catalyses the reaction a lipid A disaccharide + ATP = a lipid IVA + ADP + H(+). The protein operates within glycolipid biosynthesis; lipid IV(A) biosynthesis; lipid IV(A) from (3R)-3-hydroxytetradecanoyl-[acyl-carrier-protein] and UDP-N-acetyl-alpha-D-glucosamine: step 6/6. In terms of biological role, transfers the gamma-phosphate of ATP to the 4'-position of a tetraacyldisaccharide 1-phosphate intermediate (termed DS-1-P) to form tetraacyldisaccharide 1,4'-bis-phosphate (lipid IVA). This Alcanivorax borkumensis (strain ATCC 700651 / DSM 11573 / NCIMB 13689 / SK2) protein is Tetraacyldisaccharide 4'-kinase.